A 124-amino-acid polypeptide reads, in one-letter code: Small ribosomal subunit protein bS6 (124 aa).

The tract at residues 96 to 124 is disordered; sequence ETGPSPMMKEVQREEAKKAAAAQPTEAQA. Positions 114–124 are enriched in low complexity; sequence AAAAQPTEAQA.

This sequence belongs to the bacterial ribosomal protein bS6 family.

Binds together with bS18 to 16S ribosomal RNA. The chain is Small ribosomal subunit protein bS6 from Burkholderia lata (strain ATCC 17760 / DSM 23089 / LMG 22485 / NCIMB 9086 / R18194 / 383).